Reading from the N-terminus, the 206-residue chain is Large ribosomal subunit protein uL4 (206 aa).

Residues Ala43 to Ser78 form a disordered region. Residues Lys49 to His58 show a composition bias toward basic and acidic residues. Residues Thr59–Gly70 are compositionally biased toward basic residues.

The protein belongs to the universal ribosomal protein uL4 family. As to quaternary structure, part of the 50S ribosomal subunit.

Functionally, one of the primary rRNA binding proteins, this protein initially binds near the 5'-end of the 23S rRNA. It is important during the early stages of 50S assembly. It makes multiple contacts with different domains of the 23S rRNA in the assembled 50S subunit and ribosome. In terms of biological role, forms part of the polypeptide exit tunnel. In Cupriavidus metallidurans (strain ATCC 43123 / DSM 2839 / NBRC 102507 / CH34) (Ralstonia metallidurans), this protein is Large ribosomal subunit protein uL4.